The primary structure comprises 431 residues: Glutamate-1-semialdehyde 2,1-aminomutase (431 aa).

At K265 the chain carries N6-(pyridoxal phosphate)lysine.

It belongs to the class-III pyridoxal-phosphate-dependent aminotransferase family. HemL subfamily. Homodimer. It depends on pyridoxal 5'-phosphate as a cofactor.

The protein resides in the cytoplasm. The enzyme catalyses (S)-4-amino-5-oxopentanoate = 5-aminolevulinate. Its pathway is porphyrin-containing compound metabolism; protoporphyrin-IX biosynthesis; 5-aminolevulinate from L-glutamyl-tRNA(Glu): step 2/2. This chain is Glutamate-1-semialdehyde 2,1-aminomutase, found in Aliivibrio fischeri (strain MJ11) (Vibrio fischeri).